Here is a 238-residue protein sequence, read N- to C-terminus: MAADGQCSLPASWRPVTLTHVEYPAGDLSGHLLAYLSLSPVVIIVGFVTLIIFKRELHTISFLGGLVLNEGVNWLIKHVIQEPRPCGGPHPTVGTKYGMPSSHSQFMWFFSVYSFLFLYLRMHQTNNARFLDLLWRHVLSLGLLTAAFLVSYSRVYLLYHTWSQVLYGGVAGSLMAIAWFAFTQEVLTPLFPRIAAWPISEFFLIRDTSLIPNVLWFEYTVTRAEARNRQRKLGTKLQ.

The next 4 membrane-spanning stretches (helical) occupy residues 33–53 (LAYL…LIIF), 100–120 (PSSH…FLYL), 130–150 (FLDL…AFLV), and 162–182 (WSQV…WFAF).

This sequence belongs to the dolichyldiphosphatase family.

The protein resides in the endoplasmic reticulum membrane. It carries out the reaction a di-trans,poly-cis-dolichyl diphosphate + H2O = a di-trans,poly-cis-dolichyl phosphate + phosphate + H(+). It participates in protein modification; protein glycosylation. Functionally, required for efficient N-glycosylation. Necessary for maintaining optimal levels of dolichol-linked oligosaccharides. Hydrolyzes dolichyl pyrophosphate at a very high rate and dolichyl monophosphate at a much lower rate. Does not act on phosphatidate. The protein is Dolichyldiphosphatase 1 (DOLPP1) of Rhinolophus ferrumequinum (Greater horseshoe bat).